The chain runs to 466 residues: Soluble pyridine nucleotide transhydrogenase (466 aa).

Residue 36-45 (ERYHNVGGGC) coordinates FAD.

Belongs to the class-I pyridine nucleotide-disulfide oxidoreductase family. FAD is required as a cofactor.

It is found in the cytoplasm. It catalyses the reaction NAD(+) + NADPH = NADH + NADP(+). In terms of biological role, conversion of NADPH, generated by peripheral catabolic pathways, to NADH, which can enter the respiratory chain for energy generation. This chain is Soluble pyridine nucleotide transhydrogenase, found in Salmonella gallinarum (strain 287/91 / NCTC 13346).